Consider the following 388-residue polypeptide: Meiotic driver wtf13 (388 aa).

Residues 1–29 show a composition bias toward basic and acidic residues; that stretch reads MKNKDYPLRSSMDELSTKNDNEIDLEKGP. The disordered stretch occupies residues 1-39; that stretch reads MKNKDYPLRSSMDELSTKNDNEIDLEKGPLPEYNSEDGS. Helical transmembrane passes span 89–109, 119–139, 152–172, 182–202, 207–227, 243–263, 267–287, 297–317, and 331–351; these read LLIS…CVNP, AFSV…FCFF, VTVI…AQCV, CVKV…VGLY, DLVV…FGCV, CSIS…IWTL, LFGL…TKGL, ATGY…LFFY, and FIGN…GGIG.

It belongs to the WTF family. Homomer. Forms protein aggregates. The two isoforms can interact with each other and with themselves. High sequence similarity is required for their interaction.

Its subcellular location is the spore membrane. The protein localises to the vacuole membrane. It is found in the ascus epiplasm. It localises to the cytoplasm. The protein resides in the endoplasmic reticulum membrane. In terms of biological role, promotes unequal transmission of alleles from the parental zygote to progeny spores by acting as poison/antidote system where the poison and antidote proteins are produced from the same locus; the poison component is trans-acting and targets all spores within an ascus whereas the antidote component is spore-specific, leading to poisoning of all progeny that do not inherit the allele. Its function is as follows. Localizes isoform 2 to the vacuole thereby facilitating its degradation. In addition to suppressing isoform 2, also suppresses S.pombe strain FY29033 wtf18 isoform 2. Forms toxic aggregates that disrupt spore maturation. This Schizosaccharomyces pombe (strain 972 / ATCC 24843) (Fission yeast) protein is Meiotic driver wtf13.